The following is a 477-amino-acid chain: 3-isopropylmalate dehydratase large subunit (477 aa).

The [4Fe-4S] cluster site is built by Cys352, Cys413, and Cys416.

Belongs to the aconitase/IPM isomerase family. LeuC type 1 subfamily. In terms of assembly, heterodimer of LeuC and LeuD. [4Fe-4S] cluster serves as cofactor.

It catalyses the reaction (2R,3S)-3-isopropylmalate = (2S)-2-isopropylmalate. It participates in amino-acid biosynthesis; L-leucine biosynthesis; L-leucine from 3-methyl-2-oxobutanoate: step 2/4. Functionally, catalyzes the isomerization between 2-isopropylmalate and 3-isopropylmalate, via the formation of 2-isopropylmaleate. The chain is 3-isopropylmalate dehydratase large subunit from Pseudomonas entomophila (strain L48).